A 942-amino-acid polypeptide reads, in one-letter code: Apolipoprotein B receptor (942 aa).

Disordered stretches follow at residues 66–212 (GLRS…VTED), 240–269 (ERMV…QAML), 283–487 (DSLG…SPER), 501–607 (AGPE…VPWE), and 671–942 (EGRG…PKPQ). Composition is skewed to basic and acidic residues over residues 106–123 (QAER…DARG), 132–143 (PEAEPGTHRDRS), 240–252 (ERMV…ERAR), 312–330 (EADK…EAEV), and 338–352 (EAER…HIAE). Residues 353 to 370 (EEAMGEQETEGSFEDEER) are compositionally biased toward acidic residues. Ser364 bears the Phosphoserine mark. The segment covering 384 to 397 (EEVRAEESSREKRN) has biased composition (basic and acidic residues). The span at 415–425 (PDWEDSPEVST) shows a compositional bias: acidic residues. 2 stretches are compositionally biased toward basic and acidic residues: residues 444 to 458 (LRVK…ELVR) and 466 to 475 (QLEEGQKGQE). A phosphoserine mark is found at Ser484 and Ser520. Composition is skewed to basic and acidic residues over residues 514–531 (GVDR…EAGK) and 672–687 (GRGE…ETTE). Over residues 709–721 (QEIDGTEEGEQAE) the composition is skewed to acidic residues. The span at 837 to 853 (SRLDVSVPRSRVLLSRS) shows a compositional bias: low complexity. Over residues 854–863 (SSRRRSRPSF) the composition is skewed to basic residues.

As to quaternary structure, homodimer. In terms of processing, there are 2 forms in macrophages, the membrane-binding proteins 200 kDa (MBP 200) and 235 kDa (MBP 235), that can be reduced into a single active ligand-binding species with intermediate mobility (MBP 200R). In terms of tissue distribution, highly expressed in spleen, lung and skeletal muscle, and weakly in brain, heart, kidney, and testis.

Its subcellular location is the cell membrane. Macrophage receptor that binds to the apolipoprotein B48 (APOB) of dietary triglyceride (TG)-rich lipoproteins (TRL) or to a like domain of APOB in hypertriglyceridemic very low density lipoprotein (HTG-VLDL). Binds and internalizes TRL when out of the context of the macrophage. May provide essential lipids to reticuloendothelial cells. Could also be involved in foam cell formation with elevated TRL and remnant lipoprotein (RLP). Mediates the rapid high-affinity uptake of chylomicrons (CM), HTG-VLDL, and trypsinized (tryp) VLDL devoid of APOE in vitro in macrophages. This Mus musculus (Mouse) protein is Apolipoprotein B receptor.